The sequence spans 310 residues: N-acetyl-gamma-glutamyl-phosphate reductase (310 aa).

Cys-117 is an active-site residue.

It belongs to the NAGSA dehydrogenase family. Type 2 subfamily.

The protein resides in the cytoplasm. The catalysed reaction is N-acetyl-L-glutamate 5-semialdehyde + phosphate + NADP(+) = N-acetyl-L-glutamyl 5-phosphate + NADPH + H(+). The protein operates within amino-acid biosynthesis; L-arginine biosynthesis; N(2)-acetyl-L-ornithine from L-glutamate: step 3/4. Its function is as follows. Catalyzes the NADPH-dependent reduction of N-acetyl-5-glutamyl phosphate to yield N-acetyl-L-glutamate 5-semialdehyde. The chain is N-acetyl-gamma-glutamyl-phosphate reductase from Brucella ovis (strain ATCC 25840 / 63/290 / NCTC 10512).